A 523-amino-acid chain; its full sequence is Probable 3-ketoacyl-CoA synthase 20 (523 aa).

Helical transmembrane passes span 31 to 55 and 78 to 96; these read IVAV…AAGG and ALAV…YAAS. In terms of domain architecture, FAE spans 93–382; sequence YAASRPRPVY…RFLATVVLKR (290 aa). Residues Cys237, His317, His401, His405, and Asn438 contribute to the active site.

Belongs to the thiolase-like superfamily. Chalcone/stilbene synthases family. As to expression, highly expressed in leaf sheaths. Expressed in leaves, flag leaves and panicles.

The protein resides in the membrane. It carries out the reaction a very-long-chain acyl-CoA + malonyl-CoA + H(+) = a very-long-chain 3-oxoacyl-CoA + CO2 + CoA. Its function is as follows. Contributes to fatty acids elongation. Plays a role in controlling leaf anatomy and plant architecture. The sequence is that of Probable 3-ketoacyl-CoA synthase 20 from Oryza sativa subsp. japonica (Rice).